The sequence spans 190 residues: MATIGYIRVSTIDQNIDLQRNALTSANCDRIFEDRISGKIANRPGLKRALKYVNKGDTLVVWKLDRLGRSVKNLVALISELHERGAHFHSLTDSIDTSSAMGRFFFHVMSAPAEMERELIVERTLAGLAAARAQGRLGGHPRAINRHEQEQISRLLEKGHPRQQLAIIFGIGVSTLYRYFPASRIKKRMN.

One can recognise a Resolvase/invertase-type recombinase catalytic domain in the interval 2–135 (ATIGYIRVST…AGLAAARAQG (134 aa)). Residue S10 is the O-(5'-phospho-DNA)-serine intermediate of the active site. A DNA-binding region (H-T-H motif) is located at residues 162 to 181 (RQQLAIIFGIGVSTLYRYFP).

Belongs to the site-specific recombinase resolvase family.

A DNA fragment of approximately 900 base pairs, adjacent to the fljB (H2) gene, which specifies the synthesis of phase-2 flagellin, can exist in either orientation with respect to fljB. The orientation of the inversion region controls expression of fljB. The hin gene occupies about two-thirds of the inversion region; it is required for the inversion of the fljB controlling region. The sequence is that of DNA-invertase (hin) from Salmonella abortus-equi.